A 760-amino-acid chain; its full sequence is MEDDGRLAPRQIWARPTSTTTRSYVPGCTPFLLPSDGYVYLNRTYSISLGENAIYDPACTSTPTTTEHAGAALDIHDPFYASVTPLLYAMGCATVVSYLLVIILLITPRTFYVGGPGGGANFLGRHGMVSGSYSNNSSVVGVGGRPWLQKVAALLVAISLTIATADSFRVAEKQYDHGYSDAEALTSEVIDGTEIKVVRIISSTFLWLAQVQTLIRLFPRHKEKVMIKWAGFALIVLDTIFAILDKFLVKTNTTRPRLYEDAIPALSYLFELALNLLYAAWVIFYSLSKHRFAFFHPKMRNICLVALLSLCAVLIPVVFFVLDIAKPEIAGWGTYIRWVGSAAASVVVWEWVERIEALERDERKDGILGREVFDGDEMIEVTPSEEVDWPRQQFHGHDRGGGTGMSSAWGGVMGLAHRPLRPRGGRITQTQREAEGATAAKSRKRRSARPTPPPAAVTPVSRADTTSAASTVYNVHYYPVSSPTPPVAMPFMEEEDEGSDGDGEKELAVVQNQQSSLPTQDTYTEPRRQNSPQIVNVDNRWRFILNPFKNRHAALPREVASAQAEEEGFLSPDDQAPRQGDEENPHYTPRHRGLFSFHPMSDGASRRQSGADQPLPVTVIPARRRGQDTWSPQWFTNSNLVDRSSSRRTASRPRDQRMKVIQPQVQSAAPWTAADMEASFSSMDYELRYDPEAAALVSEDIPDHHSQPTQADSPAHPTMSGGNGPSGGETQSALDTGPGIEGSVNEGSVIEGPEESHSQR.

At 1–85 (MEDDGRLAPR…HDPFYASVTP (85 aa)) the chain is on the extracellular side. The helical transmembrane segment at 86 to 106 (LLYAMGCATVVSYLLVIILLI) threads the bilayer. The Cytoplasmic segment spans residues 107 to 150 (TPRTFYVGGPGGGANFLGRHGMVSGSYSNNSSVVGVGGRPWLQK). A helical transmembrane segment spans residues 151 to 171 (VAALLVAISLTIATADSFRVA). The Extracellular portion of the chain corresponds to 172-194 (EKQYDHGYSDAEALTSEVIDGTE). The helical transmembrane segment at 195-215 (IKVVRIISSTFLWLAQVQTLI) threads the bilayer. The Cytoplasmic segment spans residues 216–228 (RLFPRHKEKVMIK). The helical transmembrane segment at 229–249 (WAGFALIVLDTIFAILDKFLV) threads the bilayer. At 250–262 (KTNTTRPRLYEDA) the chain is on the extracellular side. Residues 263–283 (IPALSYLFELALNLLYAAWVI) form a helical membrane-spanning segment. Topologically, residues 284-301 (FYSLSKHRFAFFHPKMRN) are cytoplasmic. The helical transmembrane segment at 302-322 (ICLVALLSLCAVLIPVVFFVL) threads the bilayer. Residues 323–328 (DIAKPE) lie on the Extracellular side of the membrane. The helical transmembrane segment at 329 to 349 (IAGWGTYIRWVGSAAASVVVW) threads the bilayer. Topologically, residues 350 to 760 (EWVERIEALE…EGPEESHSQR (411 aa)) are cytoplasmic. Disordered stretches follow at residues 389-465 (WPRQ…RADT), 479-503 (PVSS…DGDG), 559-615 (VASA…DQPL), 629-666 (TWSP…PQVQ), and 696-760 (LVSE…HSQR). Residues 492-501 (MEEEDEGSDG) are compositionally biased toward acidic residues. Over residues 575–585 (QAPRQGDEENP) the composition is skewed to basic and acidic residues. Over residues 629-642 (TWSPQWFTNSNLVD) the composition is skewed to polar residues.

It belongs to the palH/RIM21 family.

Its subcellular location is the cell membrane. Its function is as follows. Required for the proteolytic cleavage of the transcription factor pacC in response to alkaline ambient pH. Might be a pH sensor. The chain is pH-response regulator protein palH/RIM21 (palH) from Emericella nidulans (strain FGSC A4 / ATCC 38163 / CBS 112.46 / NRRL 194 / M139) (Aspergillus nidulans).